Here is a 270-residue protein sequence, read N- to C-terminus: Tryptophan synthase alpha chain (270 aa).

Active-site proton acceptor residues include E51 and D62.

The protein belongs to the TrpA family. In terms of assembly, tetramer of two alpha and two beta chains.

The catalysed reaction is (1S,2R)-1-C-(indol-3-yl)glycerol 3-phosphate + L-serine = D-glyceraldehyde 3-phosphate + L-tryptophan + H2O. Its pathway is amino-acid biosynthesis; L-tryptophan biosynthesis; L-tryptophan from chorismate: step 5/5. The alpha subunit is responsible for the aldol cleavage of indoleglycerol phosphate to indole and glyceraldehyde 3-phosphate. This is Tryptophan synthase alpha chain from Methanothermobacter thermautotrophicus (strain ATCC 29096 / DSM 1053 / JCM 10044 / NBRC 100330 / Delta H) (Methanobacterium thermoautotrophicum).